A 252-amino-acid polypeptide reads, in one-letter code: Phosphoribosylaminoimidazole-succinocarboxamide synthase 1 (252 aa).

Belongs to the SAICAR synthetase family.

It catalyses the reaction 5-amino-1-(5-phospho-D-ribosyl)imidazole-4-carboxylate + L-aspartate + ATP = (2S)-2-[5-amino-1-(5-phospho-beta-D-ribosyl)imidazole-4-carboxamido]succinate + ADP + phosphate + 2 H(+). The protein operates within purine metabolism; IMP biosynthesis via de novo pathway; 5-amino-1-(5-phospho-D-ribosyl)imidazole-4-carboxamide from 5-amino-1-(5-phospho-D-ribosyl)imidazole-4-carboxylate: step 1/2. The chain is Phosphoribosylaminoimidazole-succinocarboxamide synthase 1 (purC1) from Caulobacter vibrioides (strain ATCC 19089 / CIP 103742 / CB 15) (Caulobacter crescentus).